We begin with the raw amino-acid sequence, 1598 residues long: Serine/threonine-protein kinase Nek1 (1598 aa).

The 275-residue stretch at 106-380 folds into the Protein kinase domain; sequence YEVIRQIGAG…ALQCLGYTIF (275 aa). ATP contacts are provided by residues 112–120 and Lys-135; that span reads IGAGRFGEV. Asp-240 acts as the Proton acceptor in catalysis.

This sequence belongs to the protein kinase superfamily. NEK Ser/Thr protein kinase family. NIMA subfamily.

It localises to the cytoplasm. Its subcellular location is the cytoskeleton. It is found in the microtubule organizing center. The protein localises to the centrosome. The protein resides in the spindle pole. It catalyses the reaction L-seryl-[protein] + ATP = O-phospho-L-seryl-[protein] + ADP + H(+). The catalysed reaction is L-threonyl-[protein] + ATP = O-phospho-L-threonyl-[protein] + ADP + H(+). With respect to regulation, phosphorylation status of the T-loop (amino acids 267-293) modulates kinase activity and subcellular localization of the protein. In terms of biological role, probable serine/threonine-protein kinase. Involved in controlling centrosome splitting. Promotes separation of the centrosome outer cores. The sequence is that of Serine/threonine-protein kinase Nek1 from Toxoplasma gondii (strain ATCC 50611 / Me49).